We begin with the raw amino-acid sequence, 386 residues long: MANLFDAPQFIEDAPSLAVNAESHTTATQPAVIFDDVGKVFANTRGVATAALANVTLNVARGEVFGIIGRSGAGKSTLLRLVNGLEKPSSGAVRVNGVSVGELDERGLVTLRRRIGMVFQHFNLLSAKTVRENIALPLKIAGVPKAAIEKKVDALLELVGLSAKRDAYPASLSGGQKQRVGIARALVTDPDILLCDEATSALDPETTQAILALLRDINQRLNLTVVLITHEMQVIREVCDTVAVIERGEVVETGPVWRVFGDPQHDATRALLRTLVHDLPTDLAERVKPLHDIAQADAQILLDVRFTGADAREPDLGGLASALSVEGGRVSFVHGGIDRIQGHAQGRLVVSAQVRANADSTVQAQIATLLERARRYANHVEVLGYV.

The region spanning Val-32–Leu-272 is the ABC transporter domain. Gly-69–Ser-76 provides a ligand contact to ATP.

This sequence belongs to the ABC transporter superfamily. Methionine importer (TC 3.A.1.24) family. In terms of assembly, the complex is composed of two ATP-binding proteins (MetN), two transmembrane proteins (MetI) and a solute-binding protein (MetQ).

The protein localises to the cell inner membrane. It catalyses the reaction L-methionine(out) + ATP + H2O = L-methionine(in) + ADP + phosphate + H(+). The catalysed reaction is D-methionine(out) + ATP + H2O = D-methionine(in) + ADP + phosphate + H(+). Part of the ABC transporter complex MetNIQ involved in methionine import. Responsible for energy coupling to the transport system. The polypeptide is Methionine import ATP-binding protein MetN 2 (Paraburkholderia xenovorans (strain LB400)).